A 432-amino-acid polypeptide reads, in one-letter code: Putative transposase A625R (432 aa).

Positions 375, 378, 393, and 395 each coordinate Zn(2+).

It in the N-terminal section; belongs to the transposase 2 family. This sequence in the C-terminal section; belongs to the transposase 35 family.

This Chlorella (PBCV-1) protein is Putative transposase A625R.